The sequence spans 318 residues: Malate dehydrogenase (318 aa).

Residues 10 to 15 and aspartate 34 contribute to the NAD(+) site; that span reads GGGQIG. Positions 83 and 89 each coordinate substrate. Residues asparagine 96 and 119 to 121 contribute to the NAD(+) site; that span reads ISN. Substrate contacts are provided by asparagine 121 and arginine 152. Catalysis depends on histidine 176, which acts as the Proton acceptor.

The protein belongs to the LDH/MDH superfamily. MDH type 3 family.

It carries out the reaction (S)-malate + NAD(+) = oxaloacetate + NADH + H(+). Functionally, catalyzes the reversible oxidation of malate to oxaloacetate. This chain is Malate dehydrogenase, found in Geotalea daltonii (strain DSM 22248 / JCM 15807 / FRC-32) (Geobacter daltonii).